A 303-amino-acid polypeptide reads, in one-letter code: Mitochondrial basic amino acids transporter (303 aa).

6 helical membrane passes run 2–22 (ALDFLAGCAGGVAGVLVGHPF), 61–81 (GLGSPLMGLTFINALVFGVQG), 96–116 (FLAGAAAGAIQCVICCPMELA), 153–172 (GMVSTLLRETPSFGVYFLTY), 187–207 (LLVPKLLLAGGTSGIVSWLST), and 255–275 (LLRAFPVNAATFATVTVVLTY). 3 Solcar repeats span residues 2 to 86 (ALDF…TLRA), 90 to 178 (DSPL…LTRA), and 185 to 275 (DRLL…VLTY). Positions 282 to 303 (GPEGEAVPAAPAGPALAQPSSL) are disordered. The span at 284-303 (EGEAVPAAPAGPALAQPSSL) shows a compositional bias: low complexity.

This sequence belongs to the mitochondrial carrier (TC 2.A.29) family.

Its subcellular location is the mitochondrion inner membrane. The catalysed reaction is L-lysine(out) + L-arginine(in) = L-lysine(in) + L-arginine(out). The enzyme catalyses L-histidine(out) + L-arginine(in) = L-histidine(in) + L-arginine(out). It carries out the reaction L-ornithine(in) + L-arginine(out) = L-ornithine(out) + L-arginine(in). It catalyses the reaction L-homoarginine(in) + L-arginine(out) = L-homoarginine(out) + L-arginine(in). The catalysed reaction is N(omega)-methyl-L-arginine(in) + L-arginine(out) = N(omega)-methyl-L-arginine(out) + L-arginine(in). The enzyme catalyses L-arginine(in) = L-arginine(out). It carries out the reaction L-lysine(in) = L-lysine(out). It catalyses the reaction L-ornithine(in) = L-ornithine(out). The catalysed reaction is L-histidine(out) = L-histidine(in). Its function is as follows. Mitochondrial transporter of arginine, lysine, homoarginine, methylarginine and, to a much lesser extent, ornithine and histidine. Does not transport carnitine nor acylcarnitines. Functions by both counter-exchange and uniport mechanisms. Plays a physiological role in the import of basic amino acids into mitochondria for mitochondrial protein synthesis and amino acid degradation. The chain is Mitochondrial basic amino acids transporter from Homo sapiens (Human).